Consider the following 423-residue polypeptide: Putative gustatory receptor 97a (423 aa).

The Cytoplasmic segment spans residues 1 to 31 (MRFLRRQTRRLRSIWQRSLPVRFRRGKLHTQ). A helical transmembrane segment spans residues 32–52 (LVTICLYATVFLNILYGVYLG). The Extracellular segment spans residues 53–65 (RFSFRRKKFVFSK). Residues 66–86 (GLTIYSLFVATFFALFYIWNI) traverse the membrane as a helical segment. Residues 87–99 (YNEISTGQINLRD) lie on the Cytoplasmic side of the membrane. A helical transmembrane segment spans residues 100–120 (TIGIYCYMNVCVCLFNYVTQW). The Extracellular portion of the chain corresponds to 121–152 (EKTLQIIRFQNSVPLFKVLDSLDISAMIVWRA). The helical transmembrane segment at 153 to 173 (FIYGLLKIVFCPLITYITLIL) threads the bilayer. Residues 174-200 (YHRRSISESQWTSVTTTKTMLPLIVSN) are Cytoplasmic-facing. Residues 201 to 221 (QINNCFFGGLVLANLIFAAVN) traverse the membrane as a helical segment. At 222–278 (RKLHGIVKEANMLQSPVQMNLHKPYYRMRRFCELADLLDELARKYGFTASRSKNYLR) the chain is on the extracellular side. The helical transmembrane segment at 279–299 (FTDWSMVLSMLMNLLGITMGC) threads the bilayer. Over 300–317 (YNQYLAIADHYINEEPFD) the chain is Cytoplasmic. A helical membrane pass occupies residues 318-338 (LFLAIVLVVFLAVPFLELVMV). Over 339 to 423 (ARISNQTLTR…SDLTLRFSLK (85 aa)) the chain is Extracellular. N-linked (GlcNAc...) asparagine glycans are attached at residues asparagine 343 and asparagine 393.

The protein belongs to the insect chemoreceptor superfamily. Gustatory receptor (GR) family. Gr22e subfamily. In larvae, is expressed in neurons of the terminal external chemosensory organ.

It localises to the cell membrane. In terms of biological role, probable gustatory receptor which mediates acceptance or avoidance behavior, depending on its substrates. This is Putative gustatory receptor 97a (Gr97a) from Drosophila melanogaster (Fruit fly).